Reading from the N-terminus, the 436-residue chain is Trigger factor (436 aa).

Residues 163-248 (GDRVVLDFAG…VKEVAEGVLP (86 aa)) enclose the PPIase FKBP-type domain.

This sequence belongs to the FKBP-type PPIase family. Tig subfamily.

Its subcellular location is the cytoplasm. The catalysed reaction is [protein]-peptidylproline (omega=180) = [protein]-peptidylproline (omega=0). Its function is as follows. Involved in protein export. Acts as a chaperone by maintaining the newly synthesized protein in an open conformation. Functions as a peptidyl-prolyl cis-trans isomerase. The protein is Trigger factor of Bordetella pertussis (strain Tohama I / ATCC BAA-589 / NCTC 13251).